The primary structure comprises 313 residues: Acetaldehyde dehydrogenase 2 (313 aa).

12 to 15 lines the NAD(+) pocket; the sequence is SGNI. Cys-132 acts as the Acyl-thioester intermediate in catalysis. NAD(+)-binding positions include 163–171 and Asn-287; that span reads SAGPGTRAN.

It belongs to the acetaldehyde dehydrogenase family.

The catalysed reaction is acetaldehyde + NAD(+) + CoA = acetyl-CoA + NADH + H(+). The sequence is that of Acetaldehyde dehydrogenase 2 (amnH) from Paraburkholderia xenovorans (strain LB400).